A 250-amino-acid chain; its full sequence is Cell division protein ZapD (250 aa).

This sequence belongs to the ZapD family. As to quaternary structure, interacts with FtsZ.

The protein resides in the cytoplasm. In terms of biological role, cell division factor that enhances FtsZ-ring assembly. Directly interacts with FtsZ and promotes bundling of FtsZ protofilaments, with a reduction in FtsZ GTPase activity. In Yersinia pseudotuberculosis serotype O:1b (strain IP 31758), this protein is Cell division protein ZapD.